A 107-amino-acid polypeptide reads, in one-letter code: MQRLKKGDKVRVISGSEKGKEGIILQVFPELNTAQVEGVNVRKRHKKANQENQEGGIVDIAVPLNMSKLALIDNKAKGKTTRIKYGFDKNNKKVRISKISNSEIGSK.

It belongs to the universal ribosomal protein uL24 family. As to quaternary structure, part of the 50S ribosomal subunit.

Functionally, one of two assembly initiator proteins, it binds directly to the 5'-end of the 23S rRNA, where it nucleates assembly of the 50S subunit. Its function is as follows. One of the proteins that surrounds the polypeptide exit tunnel on the outside of the subunit. The sequence is that of Large ribosomal subunit protein uL24 from Malacoplasma penetrans (strain HF-2) (Mycoplasma penetrans).